A 682-amino-acid chain; its full sequence is Kinesin-like protein KIF2A (682 aa).

Residues 1–192 form a globular region; sequence MVTSLNEDSE…LDYRPLTTSD (192 aa). Positions 39–129 are disordered; the sequence is LAPDEEIDPG…GKKDFGLASR (91 aa). Over residues 99–115 the composition is skewed to polar residues; the sequence is IEQSASRQQNGSVSDIS. Positions 198–528 constitute a Kinesin motor domain; the sequence is RICVCVRKRP…LRYANRVKEL (331 aa). Residue 288–295 participates in ATP binding; sequence GQTGSGKT. The stretch at 638–673 forms a coiled coil; it reads QLEAILEKKIDILTELRDKVKSFRAALQEEEHASKQ.

This sequence belongs to the TRAFAC class myosin-kinesin ATPase superfamily. Kinesin family. MCAK/KIF2 subfamily. Interacts with aurka and plk1. In terms of processing, phosphorylation by plk1 promotes location at spindle microtubules and spindle poles, and enhances its microtubule depolymerization activity. Phosphorylation by AURKA interferes with location at spindle microtubules and spindle poles, and inhibits its microtubule depolymerization activity.

It is found in the cytoplasm. Its subcellular location is the cytoskeleton. It localises to the microtubule organizing center. The protein resides in the centrosome. The protein localises to the spindle pole. It is found in the spindle. In terms of biological role, plus end-directed microtubule-dependent motor. May regulate microtubule dynamics during axonal growth. Required for normal progression through mitosis. Required for normal congress of chromosomes at the metaphase plate. Required for normal spindle dynamics during mitosis. Promotes spindle turnover. Implicated in formation of bipolar mitotic spindles Has microtubule depolymerization activity. This chain is Kinesin-like protein KIF2A (kif2a), found in Xenopus laevis (African clawed frog).